The sequence spans 993 residues: Serine/threonine-protein phosphatase 6 regulatory ankyrin repeat subunit B (993 aa).

28 ANK repeats span residues 7 to 36, 40 to 69, 73 to 102, 106 to 135, 139 to 168, 172 to 201, 205 to 234, 238 to 267, 271 to 301, 305 to 334, 338 to 367, 371 to 400, 404 to 433, 437 to 466, 470 to 498, 531 to 561, 566 to 595, 599 to 628, 633 to 662, 669 to 698, 702 to 731, 735 to 764, 771 to 800, 803 to 832, 838 to 867, 871 to 901, 905 to 934, and 941 to 970; these read CEQPPLVQAIFSGDPEEIRMLIHKTEDVNA, EKRTPLHVAAFLGDAEIIELLILSGARVNA, MWLTPLHRAVASRSEEAVQVLIKHSADVNA, NWQTPLHVAAANKAVKCAEVIIPLLSSVNV, GGRTALHHAALNGHMEMVNLLLAKGANINA, KDRRALHWAAYMGHLDVVALLINHGAEVTC, KGYTPLHAAASNGQISVVKHLLNLGVEIDE, YGNTALHIACYNGQDAVVNELIDYGANVNQ, SGFTPLHFAAASTHGALCLELLVNNGADVNI, DGKSPLHMTAVHGRFTRSQTLIQNGGEIDC, DGNTPLHVAARHGHELLINTLITSGADTAK, HSMFPLHLAALNAHSDCCRKLLSSGFEIDT, FGRTCLHAAAAGGNVECIKLLQSSGADFHK, CGRTPLHYAAANCHFHCIKALVTTGANVNE, WGRTALHYAAASDMDRNKMILGNAHDNSE, EGYNSIHYAAAYGHRQCLELLLERTNTGFEE, ALKSPLHLAAYNGHHQALEVLLQSLVDLDI, KGRTALYLAAFKGHTECVEALVNQGASIFV, TKRTPLHASVINGHTLCLRLLLETADNPEV, KGQTPLMLAVAYGHIDAVSLLLEKEANVDA, VGCTALHRGIMTGHEECVQMLLEQEASILC, RGRTPLHYAAARGHATWLNELLQIALSEED, QGYTPLHWACYNGNENCIEVLLEQKCFRKF, NPFTPLHCAIINGHESCASLLLGAIDPSIV, KGRTTLHAAAFGDHAECLQLLLRHDAQVNA, SGKTALMMAAENGQAGAVDILVNSAQADLTV, DLNTPLHLAISKGHEKCALLILDKIQDESL, and ALQTPLHIAARNGLKVVVEELLAKGACVLA. Positions 974–993 are disordered; it reads NASRSNGPRSPPGTAVRKEE.

In terms of assembly, protein phosphatase 6 (PP6) holoenzyme is proposed to be a heterotrimeric complex formed by the catalytic subunit, a SAPS domain-containing subunit (PP6R) and an ankyrin repeat-domain containing regulatory subunit (ARS). Interacts with PPP6R1.

Its function is as follows. Putative regulatory subunit of protein phosphatase 6 (PP6) that may be involved in the recognition of phosphoprotein substrates. This Mus musculus (Mouse) protein is Serine/threonine-protein phosphatase 6 regulatory ankyrin repeat subunit B (Ankrd44).